We begin with the raw amino-acid sequence, 548 residues long: Chaperonin GroEL 3 (548 aa).

Residues 30-33 (TLGP), lysine 51, 87-91 (DGTTT), glycine 415, and aspartate 496 each bind ATP.

This sequence belongs to the chaperonin (HSP60) family. In terms of assembly, forms a cylinder of 14 subunits composed of two heptameric rings stacked back-to-back. Interacts with the co-chaperonin GroES.

It is found in the cytoplasm. It carries out the reaction ATP + H2O + a folded polypeptide = ADP + phosphate + an unfolded polypeptide.. In terms of biological role, together with its co-chaperonin GroES, plays an essential role in assisting protein folding. The GroEL-GroES system forms a nano-cage that allows encapsulation of the non-native substrate proteins and provides a physical environment optimized to promote and accelerate protein folding. This is Chaperonin GroEL 3 from Nitrobacter winogradskyi (strain ATCC 25391 / DSM 10237 / CIP 104748 / NCIMB 11846 / Nb-255).